The sequence spans 326 residues: Alkanal monooxygenase beta chain (326 aa).

This sequence belongs to the bacterial luciferase oxidoreductase family. Heterodimer of an alpha and a beta chain.

It carries out the reaction a long-chain fatty aldehyde + FMNH2 + O2 = a long-chain fatty acid + hnu + FMN + H2O + 2 H(+). Light-emitting reaction in luminous bacteria. The specific role of the beta subunit is unknown, but it is absolutely required for bioluminescence activity. This chain is Alkanal monooxygenase beta chain (luxB), found in Aliivibrio fischeri (Vibrio fischeri).